The sequence spans 475 residues: 7-dehydrocholesterol reductase (475 aa).

The segment at 1–21 (MAAKSQPSAPKTKSTSGLTNG) is disordered. Phosphoserine is present on Ser14. The next 6 helical transmembrane spans lie at 40–60 (LASV…FIMA), 151–173 (WLLT…PTII), 178–200 (IPLL…VKGY), 266–286 (VTNS…DFFW), 306–326 (LGWG…LYLV), and 331–351 (QLPT…YYIF). NADP(+) contacts are provided by residues Lys358, Arg362, Leu395, Trp400, and 407–408 (NY). The helical transmembrane segment at 420 to 440 (LACGGGHLLPYFYIIFMAILL) threads the bilayer. NADP(+)-binding positions include Asp447, 451 to 455 (CANKY), and Tyr462.

The protein belongs to the ERG4/ERG24 family. As to quaternary structure, interacts with DHCR24; this interaction regulates DHCR7 activity. Interacts with TMEM147.

Its subcellular location is the endoplasmic reticulum membrane. It catalyses the reaction cholesterol + NADP(+) = 7-dehydrocholesterol + NADPH + H(+). It carries out the reaction 7-dehydrodesmosterol + NADPH + H(+) = desmosterol + NADP(+). The enzyme catalyses 5,6alpha-epoxy-5alpha-cholestan-3beta-ol + H2O = 5alpha-cholestane-3beta,5,6beta-triol. The catalysed reaction is 5,6beta-epoxy-5beta-cholestan-3beta-ol + H2O = 5alpha-cholestane-3beta,5,6beta-triol. It participates in steroid biosynthesis; cholesterol biosynthesis. Its function is as follows. Oxidoreductase that catalyzes the last step of the cholesterol synthesis pathway, which transforms cholesta-5,7-dien-3beta-ol (7-dehydrocholesterol,7-DHC) into cholesterol by reducing the C7-C8 double bond of its sterol core. Can also metabolize cholesta-5,7,24-trien-3beta-ol (7-dehydrodemosterol, 7-DHD) to desmosterol, which is then metabolized by the Delta(24)-sterol reductase (DHCR24) to cholesterol. Modulates ferroptosis (a form of regulated cell death driven by iron-dependent lipid peroxidation) through the metabolic breakdown of the anti-ferroptotic metabolites 7-DHC and 7-DHD which, when accumulated, divert the propagation of peroxyl radical-mediated damage from phospholipid components to its sterol core, protecting plasma and mitochondrial membranes from phospholipid autoxidation. In terms of biological role, component of the microsomal antiestrogen binding site (AEBS), a multiproteic complex at the ER membrane that consists of an association between cholestenol Delta-isomerase/EBP and DHCR7. This complex is responsible for cholesterol-5,6-epoxide hydrolase (ChEH) activity, which consists in the hydration of cholesterol-5,6-epoxides (5,6-EC) into cholestane-3beta,5alpha,6beta-triol (CT). The precise role of each component of this complex has not been described yet. The protein is 7-dehydrocholesterol reductase (DHCR7) of Bos taurus (Bovine).